The primary structure comprises 72 residues: Nod factor export ATP-binding protein I (72 aa).

It belongs to the ABC transporter superfamily. Lipooligosaccharide exporter (TC 3.A.1.102) family. The complex is composed of two ATP-binding proteins (NodI) and two transmembrane proteins (NodJ).

The protein resides in the cell inner membrane. Functionally, part of the ABC transporter complex NodIJ involved in the export of the nodulation factors (Nod factors), the bacterial signal molecules that induce symbiosis and subsequent nodulation induction. Nod factors are LCO (lipo-chitin oligosaccharide), a modified beta-1,4-linked N-acetylglucosamine oligosaccharide. This subunit is responsible for energy coupling to the transport system. The sequence is that of Nod factor export ATP-binding protein I from Rhizobium leguminosarum bv. trifolii.